The following is a 347-amino-acid chain: Ferredoxin--NADP reductase 1 (347 aa).

FAD contacts are provided by threonine 26, aspartate 45, glutamine 53, tyrosine 58, valine 98, phenylalanine 133, aspartate 298, and serine 339.

It belongs to the ferredoxin--NADP reductase type 2 family. As to quaternary structure, homodimer. FAD serves as cofactor.

It catalyses the reaction 2 reduced [2Fe-2S]-[ferredoxin] + NADP(+) + H(+) = 2 oxidized [2Fe-2S]-[ferredoxin] + NADPH. This Chloroherpeton thalassium (strain ATCC 35110 / GB-78) protein is Ferredoxin--NADP reductase 1.